The following is a 205-amino-acid chain: Holliday junction branch migration complex subunit RuvA (205 aa).

Positions 1 to 64 (MIGKLKGVVD…EDMIRLYGFR (64 aa)) are domain I. The tract at residues 65-143 (SDAEREWFRL…AFAPVDPALV (79 aa)) is domain II. Residues 144–152 (RLAGAVEAR) form a flexible linker region. Residues 153–205 (TAPQPVADAISALVNLGYPQAQASAAVAAALQSAGAEAEAKTLIRLGLRELAR) form a domain III region.

This sequence belongs to the RuvA family. Homotetramer. Forms an RuvA(8)-RuvB(12)-Holliday junction (HJ) complex. HJ DNA is sandwiched between 2 RuvA tetramers; dsDNA enters through RuvA and exits via RuvB. An RuvB hexamer assembles on each DNA strand where it exits the tetramer. Each RuvB hexamer is contacted by two RuvA subunits (via domain III) on 2 adjacent RuvB subunits; this complex drives branch migration. In the full resolvosome a probable DNA-RuvA(4)-RuvB(12)-RuvC(2) complex forms which resolves the HJ.

It is found in the cytoplasm. The RuvA-RuvB-RuvC complex processes Holliday junction (HJ) DNA during genetic recombination and DNA repair, while the RuvA-RuvB complex plays an important role in the rescue of blocked DNA replication forks via replication fork reversal (RFR). RuvA specifically binds to HJ cruciform DNA, conferring on it an open structure. The RuvB hexamer acts as an ATP-dependent pump, pulling dsDNA into and through the RuvAB complex. HJ branch migration allows RuvC to scan DNA until it finds its consensus sequence, where it cleaves and resolves the cruciform DNA. This chain is Holliday junction branch migration complex subunit RuvA, found in Methylobacterium sp. (strain 4-46).